The sequence spans 744 residues: Cytosolic neutral trehalase (744 aa).

5 residues coordinate Ca(2+): D99, D101, N103, Q105, and D110. Substrate-binding positions include R286, 293–294 (WD), N330, 339–341 (RSQ), E406, R455, and G458. Catalysis depends on proton donor/acceptor residues D460 and E665.

It belongs to the glycosyl hydrolase 37 family. The cofactor is Ca(2+).

The protein resides in the cytoplasm. It carries out the reaction alpha,alpha-trehalose + H2O = alpha-D-glucose + beta-D-glucose. It functions in the pathway carbohydrate degradation. Functionally, hydrolyzes intracellular trehalose to glucose. This Neurospora crassa (strain ATCC 24698 / 74-OR23-1A / CBS 708.71 / DSM 1257 / FGSC 987) protein is Cytosolic neutral trehalase.